Reading from the N-terminus, the 411-residue chain is MPSRRRHSYTVGSPATTSSNYSNTTFTDRSFPTTPARTSTDTTTSIARRISGIFINCFTPPDSVSSNYIDNSKSSSDNNIRSRRSSTGSSSVQRSYGNANETEHTRFTFDEIYDATKNFSPSFRIGQGGFGTVYKVKLRDGKTFAVKRAKKSMHDDRQGADAEFMSEIQTLAQVTHLSLVKYYGFVVHNDEKILVVEYVANGTLRDHLDCKEGKTLDMATRLDIATDVAHAITYLHMYTQPPIIHRDIKSSNILLTENYRAKVADFGFARLAPDTDSGATHVSTQVKGTAGYLDPEYLTTYQLTEKSDVYSFGVLLVELLTGRRPIELSRGQKERITIRWAIKKFTSGDTISVLDPKLEQNSANNLALEKVLEMAFQCLAPHRRSRPSMKKCSEILWGIRKDYRELLNTSL.

Disordered regions lie at residues Met1–Thr44 and Ser66–Ala99. Low complexity-rich tracts occupy residues Thr16–Thr44 and Ser66–Ser95. Thr108 carries the phosphothreonine modification. Residues Phe119–Gly398 form the Protein kinase domain. Residues Ile125–Val133 and Lys147 contribute to the ATP site. Residues Tyr134–Gly159 form a caM-binding region. Asp247 acts as the Proton acceptor in catalysis. Residues Ser251 and Ser283 each carry the phosphoserine modification. 2 positions are modified to phosphothreonine: Thr284 and Thr289. Tyr297 carries the post-translational modification Phosphotyrosine.

It belongs to the protein kinase superfamily. Ser/Thr protein kinase family. In terms of assembly, interacts with calmodulin (CaM) in a Ca(2+)-dependent manner.

The protein resides in the cytoplasm. The catalysed reaction is L-seryl-[protein] + ATP = O-phospho-L-seryl-[protein] + ADP + H(+). The enzyme catalyses L-threonyl-[protein] + ATP = O-phospho-L-threonyl-[protein] + ADP + H(+). The chain is Calmodulin-binding receptor-like cytoplasmic kinase 2 (CRCK2) from Arabidopsis thaliana (Mouse-ear cress).